An 832-amino-acid polypeptide reads, in one-letter code: G-type lectin S-receptor-like serine/threonine-protein kinase RLK1 (832 aa).

The first 24 residues, 1-24, serve as a signal peptide directing secretion; it reads MGSLSCSIIHLVLILQLQTFFVFS. At 25–461 the chain is on the extracellular side; it reads QNIRNGSVPV…VPVTGNRAKK (437 aa). N29, N92, N100, N178, N240, and N251 each carry an N-linked (GlcNAc...) asparagine glycan. Positions 37–157 constitute a Bulb-type lectin domain; sequence SLTASESQQI…GSEDSDEVLW (121 aa). Positions 299-349 constitute an EGF-like; atypical domain; that stretch reads RDNMCSPDDALGNMACGYNNICSLGNNKRPKCECPERFVLKDPSNEYGDCL. 3 disulfide bridges follow: C303–C320, C314–C330, and C332–C348. One can recognise a PAN domain in the interval 357 to 446; that stretch reads CRPENQTANS…DSDTFIKVRN (90 aa). N361 is a glycosylation site (N-linked (GlcNAc...) asparagine). 2 disulfides stabilise this stretch: C397/C420 and C401/C407. N446 carries N-linked (GlcNAc...) asparagine glycosylation. The chain crosses the membrane as a helical span at residues 462–482; that stretch reads LDWLIIACSVLLGTSAFVIFD. The Cytoplasmic segment spans residues 483–832; the sequence is TSCSYRKTKK…SLSSDPVSLV (350 aa). Positions 531–803 constitute a Protein kinase domain; it reads RDFTEELGRG…NVTQMLEGVI (273 aa). ATP-binding positions include 537 to 545 and K563; that span reads LGRGAFGIV. Residues 622 to 638 are caM-binding; it reads RRPRPSWEDRKNIAVAI. D657 acts as the Proton acceptor in catalysis.

This sequence belongs to the protein kinase superfamily. Ser/Thr protein kinase family.

It localises to the cell membrane. The enzyme catalyses L-seryl-[protein] + ATP = O-phospho-L-seryl-[protein] + ADP + H(+). It catalyses the reaction L-threonyl-[protein] + ATP = O-phospho-L-threonyl-[protein] + ADP + H(+). This Arabidopsis thaliana (Mouse-ear cress) protein is G-type lectin S-receptor-like serine/threonine-protein kinase RLK1 (RLK1).